A 380-amino-acid polypeptide reads, in one-letter code: Protein kinase ORF15 (380 aa).

The Protein kinase domain maps to 93–371 (FIPVKVAGCL…LLIAQLTKFI (279 aa)). Lysine 118 contacts ATP. The Proton acceptor role is filled by aspartate 217.

Belongs to the protein kinase superfamily. Ser/Thr protein kinase family.

It catalyses the reaction L-seryl-[protein] + ATP = O-phospho-L-seryl-[protein] + ADP + H(+). It carries out the reaction L-threonyl-[protein] + ATP = O-phospho-L-threonyl-[protein] + ADP + H(+). In Ictalurid herpesvirus 1 (strain Auburn) (IcHV-1), this protein is Protein kinase ORF15 (ORF15).